Consider the following 37-residue polypeptide: Large ribosomal subunit protein bL36 (37 aa).

It belongs to the bacterial ribosomal protein bL36 family.

This chain is Large ribosomal subunit protein bL36, found in Histophilus somni (strain 129Pt) (Haemophilus somnus).